Here is a 314-residue protein sequence, read N- to C-terminus: Chitinase 1 (314 aa).

The signal sequence occupies residues 1–26 (MASVSPSSLLLLFFALLSPLLPLTSA). Residues 27 to 296 (LVFREYIGSQ…NVFRYEMQAQ (270 aa)) enclose the GH18 domain. E151 serves as the catalytic Proton donor.

The protein belongs to the glycosyl hydrolase 18 family. Chitinase class II subfamily.

The catalysed reaction is Random endo-hydrolysis of N-acetyl-beta-D-glucosaminide (1-&gt;4)-beta-linkages in chitin and chitodextrins.. Its function is as follows. Able to cleave glycolchitin. This is Chitinase 1 from Tulipa saxatilis subsp. bakeri (Tulip).